A 235-amino-acid chain; its full sequence is Large ribosomal subunit protein uL1c (235 aa).

This sequence belongs to the universal ribosomal protein uL1 family. As to quaternary structure, part of the 50S ribosomal subunit.

Its subcellular location is the plastid. The protein resides in the chloroplast. Its function is as follows. Binds directly to 23S rRNA. Might be involved in E site tRNA release (Potential). This Gracilaria tenuistipitata var. liui (Red alga) protein is Large ribosomal subunit protein uL1c (rpl1).